A 371-amino-acid polypeptide reads, in one-letter code: Lombricine kinase (371 aa).

One can recognise a Phosphagen kinase N-terminal domain in the interval 1–86 (MPKFTARQNF…FDAVINEKHG (86 aa)). A Phosphagen kinase C-terminal domain is found at 113–355 (YVKSARIRTG…GKLIEYEKLL (243 aa)). Residues 116-120 (SARIR), His179, Arg224, Arg280, 308-313 (RGTGGE), and Asp323 each bind ATP.

This sequence belongs to the ATP:guanido phosphotransferase family. In terms of assembly, homodimer.

The enzyme catalyses L-lombricine + ATP = N-phospho-L-lombricine + ADP + H(+). This chain is Lombricine kinase, found in Eisenia fetida (Red wiggler worm).